A 249-amino-acid polypeptide reads, in one-letter code: Small ribosomal subunit protein uS4m (249 aa).

An S4 RNA-binding domain is found at 133–193; the sequence is RRLDIIIYRA…PEIVNLLRNQ (61 aa).

Belongs to the universal ribosomal protein uS4 family.

It localises to the mitochondrion. This Reclinomonas americana protein is Small ribosomal subunit protein uS4m (RPS4).